The sequence spans 337 residues: Glyceraldehyde-3-phosphate dehydrogenase (337 aa).

NAD(+) contacts are provided by residues 12-13 (RI), Asp34, and Arg79. Residues 150-152 (SCT), Thr181, 210-211 (TG), and Arg233 each bind D-glyceraldehyde 3-phosphate. Cys151 (nucleophile) is an active-site residue. Asn315 serves as a coordination point for NAD(+).

The protein belongs to the glyceraldehyde-3-phosphate dehydrogenase family. As to quaternary structure, homotetramer.

It is found in the cytoplasm. The catalysed reaction is D-glyceraldehyde 3-phosphate + phosphate + NAD(+) = (2R)-3-phospho-glyceroyl phosphate + NADH + H(+). Its pathway is carbohydrate degradation; glycolysis; pyruvate from D-glyceraldehyde 3-phosphate: step 1/5. The protein is Glyceraldehyde-3-phosphate dehydrogenase (GPD) of Omphalotus olearius (Jack o'lantern).